We begin with the raw amino-acid sequence, 1069 residues long: Rab GTPase-activating protein 1 (1069 aa).

A disordered region spans residues 1–79 (MDDKASVGKI…DPPMDDQPGE (79 aa)). Low complexity predominate over residues 7–22 (VGKISVSSDSVSTLNS). Ser42 is subject to Phosphoserine. One can recognise a PID domain in the interval 142–298 (EDSVVFSKLT…IFTFSVSLEI (157 aa)). A Phosphoserine modification is found at Ser360. The segment at 482-527 (ERERRKTTASPSVRLPQSGSQSSVIPSPPEDDEEEDNDEPLLSGSG) is disordered. The segment covering 489–506 (TASPSVRLPQSGSQSSVI) has biased composition (polar residues). Over residues 510–520 (PEDDEEEDNDE) the composition is skewed to acidic residues. The Rab-GAP TBC domain maps to 566–752 (GVPEALRGEV…HIIDLLLCEG (187 aa)). A coiled-coil region spans residues 798–1047 (KKLMELACNM…ALNEVQAAKK (250 aa)). Thr996 is subject to Phosphothreonine.

Interacts with RAB6A and tubulin gamma.

The protein resides in the cytoplasm. It is found in the cytosol. Its subcellular location is the cytoskeleton. The protein localises to the microtubule organizing center. It localises to the centrosome. In terms of biological role, may act as a GTPase-activating protein of RAB6A. May play a role in microtubule nucleation by centrosome. May participate in a RAB6A-mediated pathway involved in the metaphase-anaphase transition. In Pongo abelii (Sumatran orangutan), this protein is Rab GTPase-activating protein 1.